Here is a 205-residue protein sequence, read N- to C-terminus: Putative 3-methyladenine DNA glycosylase (205 aa).

This sequence belongs to the DNA glycosylase MPG family.

The chain is Putative 3-methyladenine DNA glycosylase from Clostridium perfringens (strain 13 / Type A).